Reading from the N-terminus, the 286-residue chain is ATP synthase gamma chain (286 aa).

This sequence belongs to the ATPase gamma chain family. As to quaternary structure, F-type ATPases have 2 components, CF(1) - the catalytic core - and CF(0) - the membrane proton channel. CF(1) has five subunits: alpha(3), beta(3), gamma(1), delta(1), epsilon(1). CF(0) has three main subunits: a, b and c.

The protein localises to the cell inner membrane. Produces ATP from ADP in the presence of a proton gradient across the membrane. The gamma chain is believed to be important in regulating ATPase activity and the flow of protons through the CF(0) complex. The sequence is that of ATP synthase gamma chain from Fuscovulum blasticum (Rhodobacter blasticus).